The chain runs to 314 residues: 4-hydroxy-3-methylbut-2-enyl diphosphate reductase (314 aa).

A [4Fe-4S] cluster-binding site is contributed by Cys-12. Residues His-41 and His-74 each coordinate (2E)-4-hydroxy-3-methylbut-2-enyl diphosphate. Residues His-41 and His-74 each contribute to the dimethylallyl diphosphate site. Isopentenyl diphosphate is bound by residues His-41 and His-74. Cys-96 lines the [4Fe-4S] cluster pocket. (2E)-4-hydroxy-3-methylbut-2-enyl diphosphate is bound at residue His-124. Residue His-124 participates in dimethylallyl diphosphate binding. His-124 serves as a coordination point for isopentenyl diphosphate. Catalysis depends on Glu-126, which acts as the Proton donor. Position 167 (Thr-167) interacts with (2E)-4-hydroxy-3-methylbut-2-enyl diphosphate. [4Fe-4S] cluster is bound at residue Cys-197. Ser-225, Ser-226, Asn-227, and Ser-269 together coordinate (2E)-4-hydroxy-3-methylbut-2-enyl diphosphate. Residues Ser-225, Ser-226, Asn-227, and Ser-269 each coordinate dimethylallyl diphosphate. Isopentenyl diphosphate contacts are provided by Ser-225, Ser-226, Asn-227, and Ser-269.

Belongs to the IspH family. Requires [4Fe-4S] cluster as cofactor.

The enzyme catalyses isopentenyl diphosphate + 2 oxidized [2Fe-2S]-[ferredoxin] + H2O = (2E)-4-hydroxy-3-methylbut-2-enyl diphosphate + 2 reduced [2Fe-2S]-[ferredoxin] + 2 H(+). It carries out the reaction dimethylallyl diphosphate + 2 oxidized [2Fe-2S]-[ferredoxin] + H2O = (2E)-4-hydroxy-3-methylbut-2-enyl diphosphate + 2 reduced [2Fe-2S]-[ferredoxin] + 2 H(+). It functions in the pathway isoprenoid biosynthesis; dimethylallyl diphosphate biosynthesis; dimethylallyl diphosphate from (2E)-4-hydroxy-3-methylbutenyl diphosphate: step 1/1. Its pathway is isoprenoid biosynthesis; isopentenyl diphosphate biosynthesis via DXP pathway; isopentenyl diphosphate from 1-deoxy-D-xylulose 5-phosphate: step 6/6. Catalyzes the conversion of 1-hydroxy-2-methyl-2-(E)-butenyl 4-diphosphate (HMBPP) into a mixture of isopentenyl diphosphate (IPP) and dimethylallyl diphosphate (DMAPP). Acts in the terminal step of the DOXP/MEP pathway for isoprenoid precursor biosynthesis. This is 4-hydroxy-3-methylbut-2-enyl diphosphate reductase from Aliivibrio salmonicida (strain LFI1238) (Vibrio salmonicida (strain LFI1238)).